The primary structure comprises 146 residues: Cytochrome c-type biogenesis protein CcmE (146 aa).

At Met1–Arg8 the chain is on the cytoplasmic side. The helical; Signal-anchor for type II membrane protein transmembrane segment at Leu9–Ala29 threads the bilayer. The Periplasmic segment spans residues Leu30 to His146. Heme is bound by residues His129 and Tyr133.

Belongs to the CcmE/CycJ family.

The protein localises to the cell inner membrane. Its function is as follows. Heme chaperone required for the biogenesis of c-type cytochromes. Transiently binds heme delivered by CcmC and transfers the heme to apo-cytochromes in a process facilitated by CcmF and CcmH. This is Cytochrome c-type biogenesis protein CcmE from Aliivibrio salmonicida (strain LFI1238) (Vibrio salmonicida (strain LFI1238)).